Consider the following 135-residue polypeptide: Transcription antitermination protein NusB (135 aa).

This sequence belongs to the NusB family.

Involved in transcription antitermination. Required for transcription of ribosomal RNA (rRNA) genes. Binds specifically to the boxA antiterminator sequence of the ribosomal RNA (rrn) operons. This is Transcription antitermination protein NusB from Wolinella succinogenes (strain ATCC 29543 / DSM 1740 / CCUG 13145 / JCM 31913 / LMG 7466 / NCTC 11488 / FDC 602W) (Vibrio succinogenes).